The chain runs to 189 residues: Casparian strip membrane protein 1 (189 aa).

The Cytoplasmic portion of the chain corresponds to 1–42 (MEKNESSAIEIAESSKERKGKAPLLAAAVGHDRAAGYKRGVS). The chain crosses the membrane as a helical span at residues 43-63 (IFDLILRISAATAALAATIVM). Residues 64-90 (GTTEQTLPFFTQFFQFRAQYDDLPTFT) lie on the Extracellular side of the membrane. The chain crosses the membrane as a helical span at residues 91 to 111 (FFVVGMAIVTGYLILSVPLSI). Residues 112 to 130 (VCIARPVAIGPRFLLIVCD) lie on the Cytoplasmic side of the membrane. The helical transmembrane segment at 131–151 (TVTAVLATSAAGSSAAIVYLA) threads the bilayer. At 152–189 (HNGNSDANWLAICQQFNDFCQRVSGAVVAAFVAVVCSS) the chain is on the extracellular side.

It belongs to the Casparian strip membrane proteins (CASP) family. As to quaternary structure, homodimer and heterodimers.

The protein localises to the cell membrane. Regulates membrane-cell wall junctions and localized cell wall deposition. Required for establishment of the Casparian strip membrane domain (CSD) and the subsequent formation of Casparian strips, a cell wall modification of the root endodermis that determines an apoplastic barrier between the intraorganismal apoplasm and the extraorganismal apoplasm and prevents lateral diffusion. This Striga asiatica (Asiatic witchweed) protein is Casparian strip membrane protein 1.